A 301-amino-acid polypeptide reads, in one-letter code: UDP-N-acetylenolpyruvoylglucosamine reductase 1 (301 aa).

One can recognise an FAD-binding PCMH-type domain in the interval lysine 29–glycine 196. The active site involves arginine 174. Catalysis depends on serine 225, which acts as the Proton donor. The active site involves glutamate 295.

The protein belongs to the MurB family. It depends on FAD as a cofactor.

The protein resides in the cytoplasm. It carries out the reaction UDP-N-acetyl-alpha-D-muramate + NADP(+) = UDP-N-acetyl-3-O-(1-carboxyvinyl)-alpha-D-glucosamine + NADPH + H(+). Its pathway is cell wall biogenesis; peptidoglycan biosynthesis. In terms of biological role, cell wall formation. In Bacillus thuringiensis subsp. konkukian (strain 97-27), this protein is UDP-N-acetylenolpyruvoylglucosamine reductase 1.